The chain runs to 132 residues: Small ribosomal subunit protein uS8 (132 aa).

Belongs to the universal ribosomal protein uS8 family. As to quaternary structure, part of the 30S ribosomal subunit. Contacts proteins S5 and S12.

One of the primary rRNA binding proteins, it binds directly to 16S rRNA central domain where it helps coordinate assembly of the platform of the 30S subunit. In Coprothermobacter proteolyticus (strain ATCC 35245 / DSM 5265 / OCM 4 / BT), this protein is Small ribosomal subunit protein uS8.